The chain runs to 148 residues: Large ribosomal subunit protein uL13 (148 aa).

It belongs to the universal ribosomal protein uL13 family. In terms of assembly, part of the 50S ribosomal subunit.

Functionally, this protein is one of the early assembly proteins of the 50S ribosomal subunit, although it is not seen to bind rRNA by itself. It is important during the early stages of 50S assembly. The chain is Large ribosomal subunit protein uL13 from Ureaplasma urealyticum serovar 10 (strain ATCC 33699 / Western).